A 92-amino-acid polypeptide reads, in one-letter code: Small ribosomal subunit protein bS18 (92 aa).

This sequence belongs to the bacterial ribosomal protein bS18 family. As to quaternary structure, part of the 30S ribosomal subunit. Forms a tight heterodimer with protein bS6.

Functionally, binds as a heterodimer with protein bS6 to the central domain of the 16S rRNA, where it helps stabilize the platform of the 30S subunit. This chain is Small ribosomal subunit protein bS18, found in Cupriavidus necator (strain ATCC 17699 / DSM 428 / KCTC 22496 / NCIMB 10442 / H16 / Stanier 337) (Ralstonia eutropha).